Consider the following 672-residue polypeptide: Transcription factor tau 91 kDa subunit (672 aa).

Residues 1-158 (MAVIPAKKRG…SLGQKGRPIR (158 aa)) are required for DNA-binding. Residues 6–18 (AKKRGRPRKSVVA) constitute a DNA-binding region (a.T hook). Disordered stretches follow at residues 24–45 (SLAS…ASKK) and 67–156 (VNNV…KGRP). The span at 71-100 (DDTDDDDFVLNDEGDGEESDNVEIEFENEL) shows a compositional bias: acidic residues. The tract at residues 159-672 (LLKDLSSARD…AGLLTLEYLS (514 aa)) is sufficient for interaction with TFC8. An intrachain disulfide couples cysteine 375 to cysteine 383.

In terms of assembly, heterodimer with TFC8. Component of the TFIIIC complex composed of TFC1, TFC3, TFC4, TFC6, TFC7 and TFC8. The subunits are organized in two globular domains, tauA and tauB, connected by a proteolysis-sensitive and flexible linker. Interacts with TFC1, TFC3, TFC4 and directly with TFC8.

The protein localises to the nucleus. In terms of biological role, TFIIIC mediates tRNA and 5S RNA gene activation by binding to intragenic promoter elements. Upstream of the transcription start site, TFIIIC assembles the initiation complex TFIIIB-TFIIIC-tDNA, which is sufficient for RNA polymerase III recruitment and function. Part of the tauB domain of TFIIIC that binds boxB DNA promoter sites of tRNA and similar genes. Cooperates with TFC3 in DNA binding. This is Transcription factor tau 91 kDa subunit (TFC6) from Saccharomyces cerevisiae (strain ATCC 204508 / S288c) (Baker's yeast).